A 104-amino-acid polypeptide reads, in one-letter code: Pyrimidine/purine nucleoside phosphorylase (104 aa).

This sequence belongs to the nucleoside phosphorylase PpnP family.

The catalysed reaction is a purine D-ribonucleoside + phosphate = a purine nucleobase + alpha-D-ribose 1-phosphate. It catalyses the reaction adenosine + phosphate = alpha-D-ribose 1-phosphate + adenine. It carries out the reaction cytidine + phosphate = cytosine + alpha-D-ribose 1-phosphate. The enzyme catalyses guanosine + phosphate = alpha-D-ribose 1-phosphate + guanine. The catalysed reaction is inosine + phosphate = alpha-D-ribose 1-phosphate + hypoxanthine. It catalyses the reaction thymidine + phosphate = 2-deoxy-alpha-D-ribose 1-phosphate + thymine. It carries out the reaction uridine + phosphate = alpha-D-ribose 1-phosphate + uracil. The enzyme catalyses xanthosine + phosphate = alpha-D-ribose 1-phosphate + xanthine. Functionally, catalyzes the phosphorolysis of diverse nucleosides, yielding D-ribose 1-phosphate and the respective free bases. Can use uridine, adenosine, guanosine, cytidine, thymidine, inosine and xanthosine as substrates. Also catalyzes the reverse reactions. This chain is Pyrimidine/purine nucleoside phosphorylase, found in Colwellia psychrerythraea (strain 34H / ATCC BAA-681) (Vibrio psychroerythus).